A 22-amino-acid polypeptide reads, in one-letter code: IALQSPAGAARIRDYLYNELSK.

This sequence belongs to the peptidase S14 family. In terms of assembly, component of the chloroplastic Clp protease core complex.

The catalysed reaction is Hydrolysis of proteins to small peptides in the presence of ATP and magnesium. alpha-casein is the usual test substrate. In the absence of ATP, only oligopeptides shorter than five residues are hydrolyzed (such as succinyl-Leu-Tyr-|-NHMec, and Leu-Tyr-Leu-|-Tyr-Trp, in which cleavage of the -Tyr-|-Leu- and -Tyr-|-Trp bonds also occurs).. In terms of biological role, cleaves peptides in various proteins in a process that requires ATP hydrolysis. Has a chymotrypsin-like activity. Plays a major role in the degradation of misfolded proteins. The chain is Probable ATP-dependent Clp protease proteolytic subunit from Populus euphratica (Euphrates poplar).